Here is a 340-residue protein sequence, read N- to C-terminus: Glycerol-3-phosphate dehydrogenase [NAD(P)+] (340 aa).

Ser-15, Tyr-16, His-36, and Lys-110 together coordinate NADPH. Positions 110, 139, and 141 each coordinate sn-glycerol 3-phosphate. Ala-143 provides a ligand contact to NADPH. The sn-glycerol 3-phosphate site is built by Lys-195, Asp-248, Ser-258, Arg-259, and Asn-260. Lys-195 acts as the Proton acceptor in catalysis. Arg-259 is a binding site for NADPH. Positions 283 and 285 each coordinate NADPH.

It belongs to the NAD-dependent glycerol-3-phosphate dehydrogenase family.

It localises to the cytoplasm. It carries out the reaction sn-glycerol 3-phosphate + NAD(+) = dihydroxyacetone phosphate + NADH + H(+). The catalysed reaction is sn-glycerol 3-phosphate + NADP(+) = dihydroxyacetone phosphate + NADPH + H(+). It functions in the pathway membrane lipid metabolism; glycerophospholipid metabolism. Catalyzes the reduction of the glycolytic intermediate dihydroxyacetone phosphate (DHAP) to sn-glycerol 3-phosphate (G3P), the key precursor for phospholipid synthesis. The protein is Glycerol-3-phosphate dehydrogenase [NAD(P)+] of Baumannia cicadellinicola subsp. Homalodisca coagulata.